A 224-amino-acid polypeptide reads, in one-letter code: Cytidylate kinase (224 aa).

11-19 (GPAAAGKST) contributes to the ATP binding site.

The protein belongs to the cytidylate kinase family. Type 1 subfamily.

Its subcellular location is the cytoplasm. It catalyses the reaction CMP + ATP = CDP + ADP. The catalysed reaction is dCMP + ATP = dCDP + ADP. This chain is Cytidylate kinase, found in Geobacillus sp. (strain WCH70).